The chain runs to 206 residues: Small ribosomal subunit protein uS4 (206 aa).

In terms of domain architecture, S4 RNA-binding spans 96 to 156; the sequence is GRLDNVVYRM…EKAKKQSRVK (61 aa).

It belongs to the universal ribosomal protein uS4 family. As to quaternary structure, part of the 30S ribosomal subunit. Contacts protein S5. The interaction surface between S4 and S5 is involved in control of translational fidelity.

One of the primary rRNA binding proteins, it binds directly to 16S rRNA where it nucleates assembly of the body of the 30S subunit. Functionally, with S5 and S12 plays an important role in translational accuracy. The protein is Small ribosomal subunit protein uS4 of Erwinia tasmaniensis (strain DSM 17950 / CFBP 7177 / CIP 109463 / NCPPB 4357 / Et1/99).